Here is a 394-residue protein sequence, read N- to C-terminus: uncharacterized protein (394 aa).

4 N-linked (GlcNAc...) asparagine glycosylation sites follow: asparagine 3, asparagine 14, asparagine 20, and asparagine 25. 6 consecutive transmembrane segments (helical) span residues 64 to 84 (AVGIVTACFCFFLIPLLLVNI), 101 to 121 (FIWITLLILALAVGGFAYIDV), 133 to 153 (IFSFTFQTALPISIAIIWHVI), 180 to 200 (IFVVEYYAPIVFYVFNLMGFF), 228 to 248 (VLLAIAWVFACAMFIVYSFVY), and 256 to 276 (WVGMVIMMISILPRIVYQFLE). N-linked (GlcNAc...) asparagine glycans are attached at residues asparagine 283 and asparagine 286. A helical membrane pass occupies residues 291-311 (AGLVFGLGFCPPLILAYTVCI). The N-linked (GlcNAc...) asparagine glycan is linked to asparagine 344.

It localises to the membrane. This is an uncharacterized protein from Schizosaccharomyces pombe (strain 972 / ATCC 24843) (Fission yeast).